Here is a 551-residue protein sequence, read N- to C-terminus: Glucans biosynthesis protein D (551 aa).

Positions 1–32 (MDRRRFIKGSMAMAAVCGTSGIASLFSQAAFA) form a signal peptide, tat-type signal.

The protein belongs to the OpgD/OpgG family. Predicted to be exported by the Tat system. The position of the signal peptide cleavage has not been experimentally proven.

Its subcellular location is the periplasm. Its pathway is glycan metabolism; osmoregulated periplasmic glucan (OPG) biosynthesis. Probably involved in the control of the structural glucose backbone of osmoregulated periplasmic glucans (OPGs). The protein is Glucans biosynthesis protein D of Escherichia coli O127:H6 (strain E2348/69 / EPEC).